An 876-amino-acid polypeptide reads, in one-letter code: Bifunctional uridylyltransferase/uridylyl-removing enzyme (876 aa).

Residues 1-332 (MPYQSPITFQ…NNGEEAEAVI (332 aa)) form a uridylyltransferase region. A uridylyl-removing region spans residues 333-692 (IDDDFQRRGN…LSKKATRGGT (360 aa)). One can recognise an HD domain in the interval 451 to 573 (VDEHSIRLLK…VRDEERLEYL (123 aa)). 2 consecutive ACT domains span residues 693–777 (EVFI…RIPR) and 800–876 (LMEF…PSAQ).

The protein belongs to the GlnD family. Mg(2+) serves as cofactor.

The enzyme catalyses [protein-PII]-L-tyrosine + UTP = [protein-PII]-uridylyl-L-tyrosine + diphosphate. The catalysed reaction is [protein-PII]-uridylyl-L-tyrosine + H2O = [protein-PII]-L-tyrosine + UMP + H(+). Uridylyltransferase (UTase) activity is inhibited by glutamine, while glutamine activates uridylyl-removing (UR) activity. Its function is as follows. Modifies, by uridylylation and deuridylylation, the PII regulatory proteins (GlnB and homologs), in response to the nitrogen status of the cell that GlnD senses through the glutamine level. Under low glutamine levels, catalyzes the conversion of the PII proteins and UTP to PII-UMP and PPi, while under higher glutamine levels, GlnD hydrolyzes PII-UMP to PII and UMP (deuridylylation). Thus, controls uridylylation state and activity of the PII proteins, and plays an important role in the regulation of nitrogen assimilation and metabolism. The sequence is that of Bifunctional uridylyltransferase/uridylyl-removing enzyme from Vibrio cholerae serotype O1 (strain ATCC 39315 / El Tor Inaba N16961).